The primary structure comprises 194 residues: uncharacterized protein (194 aa).

An N-terminal signal peptide occupies residues 1–20 (MLYKFTVLLLIYSYLRNLQA). Residues N31, N72, N133, and N157 are each glycosylated (N-linked (GlcNAc...) asparagine; by host).

This is an uncharacterized protein from Ostreid herpesvirus 1 (isolate France) (OsHV-1).